The sequence spans 268 residues: GTP cyclohydrolase FolE2 (268 aa).

It belongs to the GTP cyclohydrolase IV family.

The enzyme catalyses GTP + H2O = 7,8-dihydroneopterin 3'-triphosphate + formate + H(+). Its pathway is cofactor biosynthesis; 7,8-dihydroneopterin triphosphate biosynthesis; 7,8-dihydroneopterin triphosphate from GTP: step 1/1. Converts GTP to 7,8-dihydroneopterin triphosphate. In Ralstonia nicotianae (strain ATCC BAA-1114 / GMI1000) (Ralstonia solanacearum), this protein is GTP cyclohydrolase FolE2.